The primary structure comprises 103 residues: MANETMGIALGMIETRGLVPAIEAADAMTKAAEVRLIGREFVGGGYVTVLVRGETGAVNAAVRAGADACERVGDGLVAAHIIARPHREVEPALGNGNFLGQKD.

Residues 9 to 94 (ALGMIETRGL…PHREVEPALG (86 aa)) form the BMC domain.

This sequence belongs to the bacterial microcompartments protein family. CsoS1 subfamily. As to quaternary structure, homohexamer with a small central pore. Forms a CsoS2-CsoS1-RuBisCO complex.

It is found in the carboxysome. Functionally, one of shell proteins of the carboxysome, a polyhedral inclusion where RuBisCO (ribulose bisphosphate carboxylase, ccbL-ccbS) is sequestered. Assembles into hexamers which make sheets that form the facets of the polyhedral carboxysome. This chain is Carboxysome shell protein CsoS1 (csoS1), found in Parasynechococcus marenigrum (strain WH8102).